Reading from the N-terminus, the 338-residue chain is Replication factor C small subunit (338 aa).

Position 53–60 (53–60 (GPPGVGKT)) interacts with ATP.

Belongs to the activator 1 small subunits family. RfcS subfamily. Heteromultimer composed of small subunits (RfcS) and large subunits (RfcL).

In terms of biological role, part of the RFC clamp loader complex which loads the PCNA sliding clamp onto DNA. The protein is Replication factor C small subunit of Methanosarcina acetivorans (strain ATCC 35395 / DSM 2834 / JCM 12185 / C2A).